The primary structure comprises 341 residues: tRNA N6-adenosine threonylcarbamoyltransferase (341 aa).

Fe cation contacts are provided by H115 and H119. Substrate is bound by residues 138–142 (VVSGG), D171, G184, D188, and N279. D307 contributes to the Fe cation binding site.

Belongs to the KAE1 / TsaD family. Fe(2+) serves as cofactor.

Its subcellular location is the cytoplasm. It carries out the reaction L-threonylcarbamoyladenylate + adenosine(37) in tRNA = N(6)-L-threonylcarbamoyladenosine(37) in tRNA + AMP + H(+). Its function is as follows. Required for the formation of a threonylcarbamoyl group on adenosine at position 37 (t(6)A37) in tRNAs that read codons beginning with adenine. Is involved in the transfer of the threonylcarbamoyl moiety of threonylcarbamoyl-AMP (TC-AMP) to the N6 group of A37, together with TsaE and TsaB. TsaD likely plays a direct catalytic role in this reaction. The chain is tRNA N6-adenosine threonylcarbamoyltransferase from Clostridium novyi (strain NT).